Consider the following 159-residue polypeptide: 4-deoxy-4-sulfo-D-erythrose isomerase (159 aa).

The active-site Proton acceptor is Cys-66.

This sequence belongs to the LacAB/RpiB family.

It carries out the reaction 4-deoxy-4-sulfo-D-erythrose = 4-deoxy-4-sulfo-D-erythrulose. Its function is as follows. Part of the sulfo-TK pathway, a D-sulfoquinovose degradation pathway that produces 2-hydroxyethane-1-sulfonate (isethionate). Catalyzes the isomerization of 4-deoxy-4-sulfo-D-erythrose (SE) to 4-deoxy-4-sulfo-D-erythrulose (SEu). The protein is 4-deoxy-4-sulfo-D-erythrose isomerase of Clostridium sp. (strain MSTE9).